Reading from the N-terminus, the 537-residue chain is Probable protein kinase UbiB (537 aa).

Residues L24 to W44 form a helical membrane-spanning segment. The 369-residue stretch at R126 to L494 folds into the Protein kinase domain. ATP-binding positions include L132–V140 and K154. Catalysis depends on D289, which acts as the Proton acceptor. A run of 2 helical transmembrane segments spans residues A493 to V513 and L515 to V535.

It belongs to the ABC1 family. UbiB subfamily.

Its subcellular location is the cell inner membrane. It participates in cofactor biosynthesis; ubiquinone biosynthesis [regulation]. Its function is as follows. Is probably a protein kinase regulator of UbiI activity which is involved in aerobic coenzyme Q (ubiquinone) biosynthesis. This is Probable protein kinase UbiB from Pseudomonas entomophila (strain L48).